A 376-amino-acid chain; its full sequence is MVGSRTSPIFNALRVELNAREAELVEIPLIQPADPFLDMAGEDLRRRIFLTENENGDSLCLRPEFTIPVCRNHIALNAATPKRYAYLGEVFRQRRDGAAEFLQAGIEDLGAADEAASDARSLADALSCVKAIAPDAPLEIVLGDQSVFAGMLKALGLPQGWRKKLLRSFGDAHSMDLALAELTGTQRRDPLPESLAVLVAEGDEIGLARMLEAEMLEAGISPGAGRTPVEIARRLIEKEDLAATHFPAAALDLLRQFLAIRVSLDMAAVTLRAFAADNALDLGAVLQKFEARADAIAQAGIEMKDIIYDASFGRPLDYYTGLVYEIRDASNRQDGVLAGGGRYDRLLTMLGACEAIPGVGFSIWLDRLQALAGEKQ.

Belongs to the class-II aminoacyl-tRNA synthetase family. HisZ subfamily. Heteromultimer composed of HisG and HisZ subunits.

It is found in the cytoplasm. Its pathway is amino-acid biosynthesis; L-histidine biosynthesis; L-histidine from 5-phospho-alpha-D-ribose 1-diphosphate: step 1/9. Functionally, required for the first step of histidine biosynthesis. May allow the feedback regulation of ATP phosphoribosyltransferase activity by histidine. The protein is ATP phosphoribosyltransferase regulatory subunit of Brucella ovis (strain ATCC 25840 / 63/290 / NCTC 10512).